Reading from the N-terminus, the 560-residue chain is Formate--tetrahydrofolate ligase (560 aa).

ATP is bound at residue T69–S76.

This sequence belongs to the formate--tetrahydrofolate ligase family.

It carries out the reaction (6S)-5,6,7,8-tetrahydrofolate + formate + ATP = (6R)-10-formyltetrahydrofolate + ADP + phosphate. Its pathway is one-carbon metabolism; tetrahydrofolate interconversion. The sequence is that of Formate--tetrahydrofolate ligase from Listeria innocua serovar 6a (strain ATCC BAA-680 / CLIP 11262).